The chain runs to 146 residues: Hemoglobin cathodic subunit beta (146 aa).

The region spanning 2-146 (EWSSSERSTI…LIHALSRQYF (145 aa)) is the Globin domain. Heme b-binding residues include His63 and His92.

This sequence belongs to the globin family. Heterotetramer of two alpha chains and two beta chains. Red blood cells.

Functionally, involved in oxygen transport from gills to the various peripheral tissues. In Gymnothorax unicolor (Brown moray), this protein is Hemoglobin cathodic subunit beta.